Consider the following 98-residue polypeptide: Aspartyl/glutamyl-tRNA(Asn/Gln) amidotransferase subunit C (98 aa).

This sequence belongs to the GatC family. Heterotrimer of A, B and C subunits.

It catalyses the reaction L-glutamyl-tRNA(Gln) + L-glutamine + ATP + H2O = L-glutaminyl-tRNA(Gln) + L-glutamate + ADP + phosphate + H(+). The catalysed reaction is L-aspartyl-tRNA(Asn) + L-glutamine + ATP + H2O = L-asparaginyl-tRNA(Asn) + L-glutamate + ADP + phosphate + 2 H(+). In terms of biological role, allows the formation of correctly charged Asn-tRNA(Asn) or Gln-tRNA(Gln) through the transamidation of misacylated Asp-tRNA(Asn) or Glu-tRNA(Gln) in organisms which lack either or both of asparaginyl-tRNA or glutaminyl-tRNA synthetases. The reaction takes place in the presence of glutamine and ATP through an activated phospho-Asp-tRNA(Asn) or phospho-Glu-tRNA(Gln). This is Aspartyl/glutamyl-tRNA(Asn/Gln) amidotransferase subunit C from Micrococcus luteus (strain ATCC 4698 / DSM 20030 / JCM 1464 / CCM 169 / CCUG 5858 / IAM 1056 / NBRC 3333 / NCIMB 9278 / NCTC 2665 / VKM Ac-2230) (Micrococcus lysodeikticus).